The primary structure comprises 562 residues: Eukaryotic translation initiation factor 3 subunit L (562 aa).

The tract at residues 1-29 (MSHAKEDYDSSYDPYSYQADYDGHTGDPK) is disordered. A compositionally biased stretch (low complexity) spans 11-20 (SYDPYSYQAD). The PCI domain occupies 329–535 (DSIRVFANIL…IHIADTKVAR (207 aa)).

It belongs to the eIF-3 subunit L family. As to quaternary structure, component of the eukaryotic translation initiation factor 3 (eIF-3) complex, which is composed of 13 subunits: eif3a, eif3b, eif3c, eif3d, eif3e, eif3f, eif3g, eif3h, eif3i, eif3j, eif3k, eif3l and eif3m.

It is found in the cytoplasm. In terms of biological role, component of the eukaryotic translation initiation factor 3 (eIF-3) complex, which is involved in protein synthesis of a specialized repertoire of mRNAs and, together with other initiation factors, stimulates binding of mRNA and methionyl-tRNAi to the 40S ribosome. The eIF-3 complex specifically targets and initiates translation of a subset of mRNAs involved in cell proliferation. The protein is Eukaryotic translation initiation factor 3 subunit L (eif3l) of Xenopus laevis (African clawed frog).